The following is a 428-amino-acid chain: UDP-N-acetylglucosamine 1-carboxyvinyltransferase (428 aa).

25–26 serves as a coordination point for phosphoenolpyruvate; it reads KN. UDP-N-acetyl-alpha-D-glucosamine is bound at residue arginine 102. Residue cysteine 126 is the Proton donor of the active site. Cysteine 126 carries the post-translational modification 2-(S-cysteinyl)pyruvic acid O-phosphothioketal. 2 residues coordinate UDP-N-acetyl-alpha-D-glucosamine: aspartate 316 and valine 338.

Belongs to the EPSP synthase family. MurA subfamily.

Its subcellular location is the cytoplasm. It carries out the reaction phosphoenolpyruvate + UDP-N-acetyl-alpha-D-glucosamine = UDP-N-acetyl-3-O-(1-carboxyvinyl)-alpha-D-glucosamine + phosphate. The protein operates within cell wall biogenesis; peptidoglycan biosynthesis. Cell wall formation. Adds enolpyruvyl to UDP-N-acetylglucosamine. This is UDP-N-acetylglucosamine 1-carboxyvinyltransferase from Anaplasma marginale (strain Florida).